The following is a 268-amino-acid chain: Proliferating cell nuclear antigen (268 aa).

A DNA-binding region spans residues 61–80 (RCDRNPSMGMNLNNMAKMLK).

It belongs to the PCNA family.

Its subcellular location is the nucleus. This protein is an auxiliary protein of DNA polymerase delta and is involved in the control of eukaryotic DNA replication by increasing the polymerase's processibility during elongation of the leading strand. The protein is Proliferating cell nuclear antigen of Catharanthus roseus (Madagascar periwinkle).